The chain runs to 93 residues: Guanine nucleotide-binding protein subunit gamma (93 aa).

Residues 1 to 22 (MPQYASRDVGDPSQIKKNKQSM) form a disordered region. Cysteine 89 carries the S-palmitoyl cysteine lipid modification. Cysteine 90 is modified (cysteine methyl ester). Residue cysteine 90 is the site of S-farnesyl cysteine attachment. The propeptide at 91–93 (VVM) is removed in mature form.

Belongs to the G protein gamma family. In terms of assembly, g proteins are composed of 3 units, alpha, beta and gamma.

It is found in the membrane. The protein is Guanine nucleotide-binding protein subunit gamma (gng-1) of Neurospora crassa (strain ATCC 24698 / 74-OR23-1A / CBS 708.71 / DSM 1257 / FGSC 987).